We begin with the raw amino-acid sequence, 256 residues long: 5-keto-4-deoxy-D-glucarate aldolase (256 aa).

The active-site Proton acceptor is the His-50. A substrate-binding site is contributed by Gln-151. Glu-153 contributes to the Mg(2+) binding site. Residues Ser-178 and Asp-179 each coordinate substrate. Asp-179 contributes to the Mg(2+) binding site.

The protein belongs to the HpcH/HpaI aldolase family. KDGluc aldolase subfamily. In terms of assembly, homohexamer; trimer of dimers. The cofactor is Mg(2+).

The enzyme catalyses 5-dehydro-4-deoxy-D-glucarate = 2-hydroxy-3-oxopropanoate + pyruvate. The catalysed reaction is 2-dehydro-3-deoxy-D-glucarate = 2-hydroxy-3-oxopropanoate + pyruvate. Its pathway is carbohydrate acid metabolism; galactarate degradation; D-glycerate from galactarate: step 2/3. Functionally, catalyzes the reversible retro-aldol cleavage of both 5-keto-4-deoxy-D-glucarate and 2-keto-3-deoxy-D-glucarate to pyruvate and tartronic semialdehyde. In Salmonella gallinarum (strain 287/91 / NCTC 13346), this protein is 5-keto-4-deoxy-D-glucarate aldolase.